A 475-amino-acid chain; its full sequence is Ribulose bisphosphate carboxylase large chain (475 aa).

A propeptide spanning residues Met1–Val2 is cleaved from the precursor. The residue at position 3 (Pro3) is an N-acetylproline. Residue Lys14 is modified to N6,N6,N6-trimethyllysine. Positions 123 and 173 each coordinate substrate. The active-site Proton acceptor is the Lys175. Lys177 serves as a coordination point for substrate. Mg(2+) contacts are provided by Lys201, Asp203, and Glu204. The residue at position 201 (Lys201) is an N6-carboxylysine. Catalysis depends on His294, which acts as the Proton acceptor. Positions 295, 327, and 379 each coordinate substrate.

The protein belongs to the RuBisCO large chain family. Type I subfamily. As to quaternary structure, heterohexadecamer of 8 large chains and 8 small chains. Mg(2+) is required as a cofactor.

The protein localises to the plastid. It is found in the chloroplast. The catalysed reaction is 2 (2R)-3-phosphoglycerate + 2 H(+) = D-ribulose 1,5-bisphosphate + CO2 + H2O. It catalyses the reaction D-ribulose 1,5-bisphosphate + O2 = 2-phosphoglycolate + (2R)-3-phosphoglycerate + 2 H(+). In terms of biological role, ruBisCO catalyzes two reactions: the carboxylation of D-ribulose 1,5-bisphosphate, the primary event in carbon dioxide fixation, as well as the oxidative fragmentation of the pentose substrate in the photorespiration process. Both reactions occur simultaneously and in competition at the same active site. The sequence is that of Ribulose bisphosphate carboxylase large chain from Stigeoclonium helveticum (Green alga).